Consider the following 337-residue polypeptide: AP2/ERF and B3 domain-containing transcription factor At1g50680 (337 aa).

Positions 27–84 form a DNA-binding region, AP2/ERF; that stretch reads KYKGVVQQQNGHWGAQIYADHKRIWLGTFKSADEAATAYDSASIKLRSFDANSHRNFP. The TF-B3 DNA-binding region spans 157 to 271; that stretch reads FQKELTPSDV…VKTLEGQRKN (115 aa).

The protein belongs to the AP2/ERF transcription factor family. RAV subfamily.

It localises to the nucleus. Its function is as follows. Probably acts as a transcriptional activator. Binds to the GCC-box pathogenesis-related promoter element. May be involved in the regulation of gene expression by stress factors and by components of stress signal transduction pathways. The polypeptide is AP2/ERF and B3 domain-containing transcription factor At1g50680 (Arabidopsis thaliana (Mouse-ear cress)).